The sequence spans 313 residues: D-alanine--D-alanine ligase (313 aa).

In terms of domain architecture, ATP-grasp spans 108 to 308 (KLVWQQTGVP…YSELVVKVLS (201 aa)). Residue 138–193 (VAKLGLPLFVKPASEGSSVAVLKVKTADALPAALAEAATHDKIVIVEKSIEGGGEY) coordinates ATP. Residues aspartate 262, glutamate 275, and asparagine 277 each coordinate Mg(2+).

It belongs to the D-alanine--D-alanine ligase family. It depends on Mg(2+) as a cofactor. Mn(2+) serves as cofactor.

The protein localises to the cytoplasm. It catalyses the reaction 2 D-alanine + ATP = D-alanyl-D-alanine + ADP + phosphate + H(+). The protein operates within cell wall biogenesis; peptidoglycan biosynthesis. Cell wall formation. The sequence is that of D-alanine--D-alanine ligase from Burkholderia cenocepacia (strain HI2424).